We begin with the raw amino-acid sequence, 480 residues long: Protein nucleotidyltransferase YdiU (480 aa).

8 residues coordinate ATP: Gly86, Gly88, Arg89, Lys109, Asp121, Gly122, Arg172, and Arg179. The Proton acceptor role is filled by Asp248. 2 residues coordinate Mg(2+): Asn249 and Asp258. Asp258 lines the ATP pocket.

It belongs to the SELO family. Mg(2+) is required as a cofactor. It depends on Mn(2+) as a cofactor.

It catalyses the reaction L-seryl-[protein] + ATP = 3-O-(5'-adenylyl)-L-seryl-[protein] + diphosphate. The catalysed reaction is L-threonyl-[protein] + ATP = 3-O-(5'-adenylyl)-L-threonyl-[protein] + diphosphate. It carries out the reaction L-tyrosyl-[protein] + ATP = O-(5'-adenylyl)-L-tyrosyl-[protein] + diphosphate. The enzyme catalyses L-histidyl-[protein] + UTP = N(tele)-(5'-uridylyl)-L-histidyl-[protein] + diphosphate. It catalyses the reaction L-seryl-[protein] + UTP = O-(5'-uridylyl)-L-seryl-[protein] + diphosphate. The catalysed reaction is L-tyrosyl-[protein] + UTP = O-(5'-uridylyl)-L-tyrosyl-[protein] + diphosphate. Nucleotidyltransferase involved in the post-translational modification of proteins. It can catalyze the addition of adenosine monophosphate (AMP) or uridine monophosphate (UMP) to a protein, resulting in modifications known as AMPylation and UMPylation. The sequence is that of Protein nucleotidyltransferase YdiU from Salmonella heidelberg (strain SL476).